Consider the following 409-residue polypeptide: NADH-quinone oxidoreductase subunit D (409 aa).

It belongs to the complex I 49 kDa subunit family. NDH-1 is composed of 14 different subunits. Subunits NuoB, C, D, E, F, and G constitute the peripheral sector of the complex.

The protein localises to the cell inner membrane. It carries out the reaction a quinone + NADH + 5 H(+)(in) = a quinol + NAD(+) + 4 H(+)(out). NDH-1 shuttles electrons from NADH, via FMN and iron-sulfur (Fe-S) centers, to quinones in the respiratory chain. The immediate electron acceptor for the enzyme in this species is believed to be ubiquinone. Couples the redox reaction to proton translocation (for every two electrons transferred, four hydrogen ions are translocated across the cytoplasmic membrane), and thus conserves the redox energy in a proton gradient. This chain is NADH-quinone oxidoreductase subunit D, found in Helicobacter pylori (strain Shi470).